We begin with the raw amino-acid sequence, 364 residues long: D-alanine--D-alanine ligase (364 aa).

One can recognise an ATP-grasp domain in the interval 134-344; that stretch reads KVLLKSFNIP…YESLVDKLIT (211 aa). Residue 167–222 participates in ATP binding; it reads NNKLNYPVIVKPSVLGSSIGINVAYNVSQIEKYIEEAFEYDLTVVVEKFIKAREIE. Mg(2+)-binding residues include Asp-297, Glu-311, and Asn-313.

This sequence belongs to the D-alanine--D-alanine ligase family. It depends on Mg(2+) as a cofactor. Mn(2+) is required as a cofactor.

It is found in the cytoplasm. The enzyme catalyses 2 D-alanine + ATP = D-alanyl-D-alanine + ADP + phosphate + H(+). The protein operates within cell wall biogenesis; peptidoglycan biosynthesis. Its function is as follows. Cell wall formation. This is D-alanine--D-alanine ligase from Borrelia recurrentis (strain A1).